The primary structure comprises 305 residues: Olfactory receptor 5M11 (305 aa).

Over 1-25 (MSNTNGSAITEFILLGLTDCPELQS) the chain is Extracellular. A glycan (N-linked (GlcNAc...) asparagine) is linked at Asn-5. The chain crosses the membrane as a helical span at residues 26-46 (LLFVLFLVVYLVTLLGNLGMI). The Cytoplasmic portion of the chain corresponds to 47–54 (MLMRLDSR). The chain crosses the membrane as a helical span at residues 55-75 (LHTPMYFFLTNLAFVDLCYTS). The Extracellular portion of the chain corresponds to 76-98 (NATPQMSTNIVSEKTISFAGCFT). The cysteines at positions 96 and 188 are disulfide-linked. Residues 99-119 (QCYIFIALLLTEFYMLAAMAY) form a helical membrane-spanning segment. At 120–138 (DRYVAIYDPLRYSVKTSRR) the chain is on the cytoplasmic side. A helical membrane pass occupies residues 139–159 (VCICLATFPYVYGFSDGLFQA). Residues 160–195 (ILTFRLTFCRSSVINHFYCADPPLIKLSCSDTYVKE) are Extracellular-facing. The helical transmembrane segment at 196 to 216 (HAMFISAGFNLSSSLTIVLVS) threads the bilayer. Residues 217 to 236 (YAFILAAILRIKSAEGRHKA) are Cytoplasmic-facing. The chain crosses the membrane as a helical span at residues 237 to 257 (FSTCGSHMMAVTLFYGTLFCM). Residues 258 to 270 (YIRPPTDKTVEES) lie on the Extracellular side of the membrane. The helical transmembrane segment at 271–291 (KIIAVFYTFVSPVLNPLIYSL) threads the bilayer. At 292–305 (RNKDVKQALKNVLR) the chain is on the cytoplasmic side.

It belongs to the G-protein coupled receptor 1 family.

The protein localises to the cell membrane. Its function is as follows. Odorant receptor. The chain is Olfactory receptor 5M11 (OR5M11) from Homo sapiens (Human).